A 303-amino-acid polypeptide reads, in one-letter code: Methionyl-tRNA formyltransferase (303 aa).

111–114 (SLLP) is a binding site for (6S)-5,6,7,8-tetrahydrofolate.

The protein belongs to the Fmt family.

The catalysed reaction is L-methionyl-tRNA(fMet) + (6R)-10-formyltetrahydrofolate = N-formyl-L-methionyl-tRNA(fMet) + (6S)-5,6,7,8-tetrahydrofolate + H(+). Attaches a formyl group to the free amino group of methionyl-tRNA(fMet). The formyl group appears to play a dual role in the initiator identity of N-formylmethionyl-tRNA by promoting its recognition by IF2 and preventing the misappropriation of this tRNA by the elongation apparatus. The protein is Methionyl-tRNA formyltransferase of Ehrlichia chaffeensis (strain ATCC CRL-10679 / Arkansas).